A 749-amino-acid chain; its full sequence is 5-methyltetrahydropteroyltriglutamate--homocysteine methyltransferase (749 aa).

5-methyltetrahydropteroyltri-L-glutamate-binding positions include 15–18 (RELK) and K114. L-homocysteine-binding positions include 425 to 427 (IGS) and E478. Residues 425 to 427 (IGS) and E478 contribute to the L-methionine site. A 5-methyltetrahydropteroyltri-L-glutamate-binding site is contributed by W555. D593 is a binding site for L-homocysteine. D593 is a binding site for L-methionine. Position 599 (E599) interacts with 5-methyltetrahydropteroyltri-L-glutamate. Residues H636, C638, and E660 each contribute to the Zn(2+) site. H689 functions as the Proton donor in the catalytic mechanism. Residue C721 participates in Zn(2+) binding.

Belongs to the vitamin-B12 independent methionine synthase family. Requires Zn(2+) as cofactor.

The enzyme catalyses 5-methyltetrahydropteroyltri-L-glutamate + L-homocysteine = tetrahydropteroyltri-L-glutamate + L-methionine. Its pathway is amino-acid biosynthesis; L-methionine biosynthesis via de novo pathway; L-methionine from L-homocysteine (MetE route): step 1/1. Functionally, catalyzes the transfer of a methyl group from 5-methyltetrahydrofolate to homocysteine resulting in methionine formation. This chain is 5-methyltetrahydropteroyltriglutamate--homocysteine methyltransferase, found in Streptococcus pneumoniae serotype 4 (strain ATCC BAA-334 / TIGR4).